The sequence spans 240 residues: Poxin (240 aa).

H46 functions as the Proton donor in the catalytic mechanism. Y181 functions as the Shared with catalytic histidine of dimeric partner in the catalytic mechanism. Catalysis depends on K185, which acts as the Proton acceptor; shared with catalytic histidine of dimeric partner.

It belongs to the poxin family. As to quaternary structure, homodimer.

The catalysed reaction is 2',3'-cGAMP + H2O = Gp(2'-5')Ap(3') + H(+). Functionally, nuclease that cleaves host 2',3'-cGAMP. This chain is Poxin (p26), found in Bombyx mori (Silk moth).